We begin with the raw amino-acid sequence, 150 residues long: Ribonuclease K6 (150 aa).

Residues 1–23 form the signal peptide; the sequence is MVLCFPLLLLLLVLWGPVCPLHA. His38 functions as the Proton acceptor in the catalytic mechanism. 4 cysteine pairs are disulfide-bonded: Cys46–Cys104, Cys60–Cys114, Cys78–Cys129, and Cys85–Cys92. Asn55 carries N-linked (GlcNAc...) asparagine glycosylation. Residues 61-65 and Lys86 contribute to the substrate site; that span reads KHQNT. A glycan (N-linked (GlcNAc...) asparagine) is linked at Asn100. Arg105 is a substrate binding site. His145 acts as the Proton donor in catalysis.

The protein belongs to the pancreatic ribonuclease family. In terms of assembly, interacts (via N-terminus) with bacterial lipopolysaccharide (LPS). In terms of tissue distribution, highly expressed in spleen (at protein level). Has little or no expression in healthy kidneys (at protein level). Detected in interstitial leukocytes in infected kidneys (at protein level). Expressed in ureter where it localizes to urothelial and submucosal leukocytes (at protein level). Strong expression in lung and thymus, and lower expression in heart, placenta, pancreas, liver, brain and skeletal muscle. Also expressed in monocytes and neutrophils.

The protein resides in the secreted. Its subcellular location is the lysosome. It is found in the cytoplasmic granule. Functionally, ribonuclease which shows a preference for the pyrimidines uridine and cytosine. Has potent antibacterial activity against a range of Gram-positive and Gram-negative bacteria, including P.aeruginosa, A.baumanii, M.luteus, S.aureus, E.faecalis, E.faecium, S.saprophyticus and E.coli. Causes loss of bacterial membrane integrity, and also promotes agglutination of Gram-negative bacteria. Probably contributes to urinary tract sterility. Bactericidal activity is independent of RNase activity. The protein is Ribonuclease K6 (RNASE6) of Homo sapiens (Human).